A 432-amino-acid polypeptide reads, in one-letter code: Enolase (432 aa).

Residue Q167 coordinates (2R)-2-phosphoglycerate. E209 functions as the Proton donor in the catalytic mechanism. Mg(2+) is bound by residues D246, E291, and D318. 4 residues coordinate (2R)-2-phosphoglycerate: K343, R372, S373, and K394. The active-site Proton acceptor is K343.

Belongs to the enolase family. In terms of assembly, component of the RNA degradosome, a multiprotein complex involved in RNA processing and mRNA degradation. The cofactor is Mg(2+).

The protein resides in the cytoplasm. It is found in the secreted. Its subcellular location is the cell surface. It catalyses the reaction (2R)-2-phosphoglycerate = phosphoenolpyruvate + H2O. It participates in carbohydrate degradation; glycolysis; pyruvate from D-glyceraldehyde 3-phosphate: step 4/5. Functionally, catalyzes the reversible conversion of 2-phosphoglycerate (2-PG) into phosphoenolpyruvate (PEP). It is essential for the degradation of carbohydrates via glycolysis. This chain is Enolase, found in Aliivibrio salmonicida (strain LFI1238) (Vibrio salmonicida (strain LFI1238)).